We begin with the raw amino-acid sequence, 556 residues long: U3 small nucleolar RNA-associated protein 18 homolog (556 aa).

Positions 1-24 are enriched in basic residues; that stretch reads MPPERRRRMKLDRRTGAKPKRKPG. The tract at residues 1–70 is disordered; it reads MPPERRRRMK…IAVAAAEEER (70 aa). A compositionally biased stretch (low complexity) spans 43 to 65; it reads APSSQRKPPARPSAAAAAIAVAA. Lysine 84 is covalently cross-linked (Glycyl lysine isopeptide (Lys-Gly) (interchain with G-Cter in SUMO2)). Residues 111–143 form a disordered region; sequence RGPRVQEHEDSGDSEVENEAKGNFPPQKKPVWV. Phosphoserine is present on residues serine 121 and serine 124. Glycyl lysine isopeptide (Lys-Gly) (interchain with G-Cter in SUMO2) cross-links involve residues lysine 183 and lysine 201. A disordered region spans residues 193 to 219; that stretch reads VPAWAETTKRKTSSDDESEEDEDDLLQ. At threonine 204 the chain carries Phosphothreonine. Phosphoserine is present on residues serine 205, serine 206, and serine 210. Over residues 207–216 the composition is skewed to acidic residues; the sequence is DDESEEDEDD. Threonine 221 carries the post-translational modification Phosphothreonine. WD repeat units follow at residues 249–288, 293–333, 339–380, 381–419, 421–462, and 471–512; these read PTVARISSVQFHPGAQIVMVAGLDNAVSLFQVDGKTNPKI, LERF…LIPV, LKEK…GSMK, INGRVAASTFSSDSKKVYASSGDGEVYVWDVNSRKCLNR, VDEG…QETN, and NLVT…VFSN. Lysine 517 is covalently cross-linked (Glycyl lysine isopeptide (Lys-Gly) (interchain with G-Cter in SUMO2)).

The protein belongs to the WD repeat UTP18 family. In terms of assembly, part of the small subunit (SSU) processome, composed of more than 70 proteins and the RNA chaperone small nucleolar RNA (snoRNA) U3.

It localises to the nucleus. Its subcellular location is the nucleolus. In terms of biological role, part of the small subunit (SSU) processome, first precursor of the small eukaryotic ribosomal subunit. During the assembly of the SSU processome in the nucleolus, many ribosome biogenesis factors, an RNA chaperone and ribosomal proteins associate with the nascent pre-rRNA and work in concert to generate RNA folding, modifications, rearrangements and cleavage as well as targeted degradation of pre-ribosomal RNA by the RNA exosome. Involved in nucleolar processing of pre-18S ribosomal RNA. The protein is U3 small nucleolar RNA-associated protein 18 homolog of Homo sapiens (Human).